A 647-amino-acid chain; its full sequence is Exoribonuclease 2 (647 aa).

Residues 192 to 519 (RIDLTSLDFV…NHRLLKAIIQ (328 aa)) enclose the RNB domain. The S1 motif domain maps to 564-646 (EQRFTAEIID…ETRNIVARPT (83 aa)).

The protein belongs to the RNR ribonuclease family. RNase II subfamily.

The protein resides in the cytoplasm. It carries out the reaction Exonucleolytic cleavage in the 3'- to 5'-direction to yield nucleoside 5'-phosphates.. Involved in mRNA degradation. Hydrolyzes single-stranded polyribonucleotides processively in the 3' to 5' direction. This chain is Exoribonuclease 2, found in Photorhabdus laumondii subsp. laumondii (strain DSM 15139 / CIP 105565 / TT01) (Photorhabdus luminescens subsp. laumondii).